A 149-amino-acid polypeptide reads, in one-letter code: Protein FAM72B (149 aa).

Belongs to the FAM72 family.

The chain is Protein FAM72B (FAM72B) from Homo sapiens (Human).